We begin with the raw amino-acid sequence, 108 residues long: Small ribosomal subunit protein uS17 (108 aa).

This sequence belongs to the universal ribosomal protein uS17 family. Part of the 30S ribosomal subunit.

In terms of biological role, one of the primary rRNA binding proteins, it binds specifically to the 5'-end of 16S ribosomal RNA. The polypeptide is Small ribosomal subunit protein uS17 (Methanoculleus marisnigri (strain ATCC 35101 / DSM 1498 / JR1)).